Reading from the N-terminus, the 185-residue chain is Ribosome-recycling factor (185 aa).

The interval 137–162 is disordered; that stretch reads DSIDKMVKDGEVGEDEGRRAEKELDD.

It belongs to the RRF family.

The protein resides in the cytoplasm. In terms of biological role, responsible for the release of ribosomes from messenger RNA at the termination of protein biosynthesis. May increase the efficiency of translation by recycling ribosomes from one round of translation to another. This is Ribosome-recycling factor from Streptomyces coelicolor (strain ATCC BAA-471 / A3(2) / M145).